The primary structure comprises 185 residues: V-type ATP synthase subunit E (185 aa).

This sequence belongs to the V-ATPase E subunit family.

Functionally, produces ATP from ADP in the presence of a proton gradient across the membrane. The protein is V-type ATP synthase subunit E of Deinococcus radiodurans (strain ATCC 13939 / DSM 20539 / JCM 16871 / CCUG 27074 / LMG 4051 / NBRC 15346 / NCIMB 9279 / VKM B-1422 / R1).